Consider the following 429-residue polypeptide: Histidinol dehydrogenase (429 aa).

3 residues coordinate NAD(+): tyrosine 127, glutamine 188, and asparagine 211. Substrate-binding residues include serine 234, glutamine 256, and histidine 259. Glutamine 256 and histidine 259 together coordinate Zn(2+). Catalysis depends on proton acceptor residues glutamate 324 and histidine 325. Histidine 325, aspartate 358, glutamate 412, and histidine 417 together coordinate substrate. Residue aspartate 358 coordinates Zn(2+). A Zn(2+)-binding site is contributed by histidine 417.

The protein belongs to the histidinol dehydrogenase family. The cofactor is Zn(2+).

It carries out the reaction L-histidinol + 2 NAD(+) + H2O = L-histidine + 2 NADH + 3 H(+). Its pathway is amino-acid biosynthesis; L-histidine biosynthesis; L-histidine from 5-phospho-alpha-D-ribose 1-diphosphate: step 9/9. Functionally, catalyzes the sequential NAD-dependent oxidations of L-histidinol to L-histidinaldehyde and then to L-histidine. The chain is Histidinol dehydrogenase from Bacillus cereus (strain ATCC 14579 / DSM 31 / CCUG 7414 / JCM 2152 / NBRC 15305 / NCIMB 9373 / NCTC 2599 / NRRL B-3711).